A 503-amino-acid chain; its full sequence is Aromatase (503 aa).

The next 3 membrane-spanning stretches (helical) occupy residues 19–39, 51–71, and 303–323; these read EVMP…LLVW, GYCM…MGIG, and MLIA…FLIA. Residues Asp-309 and Met-374 each contribute to the substrate site. Cys-437 contacts heme.

It belongs to the cytochrome P450 family. The cofactor is heme.

The protein localises to the endoplasmic reticulum membrane. It is found in the microsome membrane. It carries out the reaction testosterone + 3 reduced [NADPH--hemoprotein reductase] + 3 O2 = 17beta-estradiol + formate + 3 oxidized [NADPH--hemoprotein reductase] + 4 H2O + 4 H(+). The catalysed reaction is androst-4-ene-3,17-dione + 3 reduced [NADPH--hemoprotein reductase] + 3 O2 = estrone + formate + 3 oxidized [NADPH--hemoprotein reductase] + 4 H2O + 4 H(+). The enzyme catalyses androst-4-ene-3,17-dione + reduced [NADPH--hemoprotein reductase] + O2 = 19-hydroxyandrost-4-ene-3,17-dione + oxidized [NADPH--hemoprotein reductase] + H2O + H(+). It catalyses the reaction 19-hydroxyandrost-4-ene-3,17-dione + reduced [NADPH--hemoprotein reductase] + O2 = 19-oxo-androst-4-ene-3,17-dione + oxidized [NADPH--hemoprotein reductase] + 2 H2O + H(+). It carries out the reaction 19-oxo-androst-4-ene-3,17-dione + reduced [NADPH--hemoprotein reductase] + O2 = estrone + formate + oxidized [NADPH--hemoprotein reductase] + H2O + 2 H(+). The catalysed reaction is estrone + reduced [NADPH--hemoprotein reductase] + O2 = 2-hydroxyestrone + oxidized [NADPH--hemoprotein reductase] + H2O + H(+). The enzyme catalyses 17beta-hydroxy-5alpha-androstan-3-one + reduced [NADPH--hemoprotein reductase] + O2 = 17beta,19-dihydroxy-3-oxo-5alpha-androstanone + oxidized [NADPH--hemoprotein reductase] + H2O + H(+). It catalyses the reaction 17beta,19-dihydroxy-3-oxo-5alpha-androstanone + reduced [NADPH--hemoprotein reductase] + O2 = 17beta-hydroxy-3,19-dioxo-5alpha-androstanone + oxidized [NADPH--hemoprotein reductase] + 2 H2O + H(+). It carries out the reaction 17beta-hydroxy-3,19-dioxo-5alpha-androstanone + reduced [NADPH--hemoprotein reductase] + O2 = 17beta-hydroxy-3-oxo-19-nor-5alpha-androst-1-ene + formate + oxidized [NADPH--hemoprotein reductase] + H2O + 2 H(+). It participates in steroid hormone biosynthesis. Its function is as follows. A cytochrome P450 monooxygenase that catalyzes the conversion of C19 androgens, androst-4-ene-3,17-dione (androstenedione) and testosterone to the C18 estrogens, estrone and estradiol, respectively. Catalyzes three successive oxidations of C19 androgens: two conventional oxidations at C19 yielding 19-hydroxy and 19-oxo/19-aldehyde derivatives, followed by a third oxidative aromatization step that involves C1-beta hydrogen abstraction combined with cleavage of the C10-C19 bond to yield a phenolic A ring and formic acid. Alternatively, the third oxidative reaction yields a 19-norsteroid and formic acid. Converts dihydrotestosterone to delta1,10-dehydro 19-nordihydrotestosterone and may play a role in homeostasis of this potent androgen. Also displays 2-hydroxylase activity toward estrone. Mechanistically, uses molecular oxygen inserting one oxygen atom into a substrate, and reducing the second into a water molecule, with two electrons provided by NADPH via cytochrome P450 reductase (CPR; NADPH-ferrihemoprotein reductase). The chain is Aromatase (CYP19A1) from Canis lupus familiaris (Dog).